Consider the following 81-residue polypeptide: Protein RALF-like 7 (81 aa).

Residues 1-29 (MSARKKNRIHVFFVSIMIIISLVSGFGEG) form the signal peptide. 2 disulfides stabilise this stretch: C46–C54 and C66–C72.

It belongs to the plant rapid alkalinization factor (RALF) family.

It is found in the secreted. Functionally, cell signaling peptide that may regulate plant stress, growth, and development. Mediates a rapid alkalinization of extracellular space by mediating a transient increase in the cytoplasmic Ca(2+) concentration leading to a calcium-dependent signaling events through a cell surface receptor and a concomitant activation of some intracellular mitogen-activated protein kinases. This is Protein RALF-like 7 (RALFL7) from Arabidopsis thaliana (Mouse-ear cress).